The primary structure comprises 226 residues: PKHD-type hydroxylase PLES_48951 (226 aa).

Positions 78 to 178 (KVFPPLFNCY…RYASFFWTQS (101 aa)) constitute a Fe2OG dioxygenase domain. The Fe cation site is built by His-96, Asp-98, and His-159. Arg-169 contributes to the 2-oxoglutarate binding site.

Fe(2+) is required as a cofactor. L-ascorbate serves as cofactor.

This Pseudomonas aeruginosa (strain LESB58) protein is PKHD-type hydroxylase PLES_48951.